The following is a 120-amino-acid chain: MSDNITSASATARFVRVSPMKARRVIDLVRGKTVVEALSILKYAPQAASEPVAKVVASAAANAENNFGLDPRTLVISEAYANEGPTMKRFQPRAQGRAFQIRKRSSHITVVVESQKEGAN.

It belongs to the universal ribosomal protein uL22 family. As to quaternary structure, part of the 50S ribosomal subunit.

Functionally, this protein binds specifically to 23S rRNA; its binding is stimulated by other ribosomal proteins, e.g. L4, L17, and L20. It is important during the early stages of 50S assembly. It makes multiple contacts with different domains of the 23S rRNA in the assembled 50S subunit and ribosome. In terms of biological role, the globular domain of the protein is located near the polypeptide exit tunnel on the outside of the subunit, while an extended beta-hairpin is found that lines the wall of the exit tunnel in the center of the 70S ribosome. This is Large ribosomal subunit protein uL22 from Corynebacterium glutamicum (strain R).